The chain runs to 255 residues: Cullin-like protein 3 (255 aa).

This sequence belongs to the cullin family.

The polypeptide is Cullin-like protein 3 (Arabidopsis thaliana (Mouse-ear cress)).